We begin with the raw amino-acid sequence, 100 residues long: MIIKNNDGESTISGKAITLPTPMIFPPPLFIRFIQYKTDGKLWSNENFEINSGKVECNGEDYELVQSRCITQKIDDDSENVMDIRIMPSRPLNRDLPYFN.

Belongs to the csb family.

This is an uncharacterized protein from Dictyostelium discoideum (Social amoeba).